The sequence spans 369 residues: Peptide chain release factor 2 (369 aa).

Gln251 bears the N5-methylglutamine mark.

This sequence belongs to the prokaryotic/mitochondrial release factor family. Post-translationally, methylated by PrmC. Methylation increases the termination efficiency of RF2.

The protein localises to the cytoplasm. Functionally, peptide chain release factor 2 directs the termination of translation in response to the peptide chain termination codons UGA and UAA. This is Peptide chain release factor 2 from Campylobacter fetus subsp. fetus (strain 82-40).